We begin with the raw amino-acid sequence, 199 residues long: Ribonuclease HII (199 aa).

In terms of domain architecture, RNase H type-2 spans 10–199 (HLVAGVDEVG…VKRALGLASN (190 aa)). Positions 16, 17, and 108 each coordinate a divalent metal cation.

Belongs to the RNase HII family. Mn(2+) serves as cofactor. The cofactor is Mg(2+).

The protein resides in the cytoplasm. It carries out the reaction Endonucleolytic cleavage to 5'-phosphomonoester.. Its function is as follows. Endonuclease that specifically degrades the RNA of RNA-DNA hybrids. The sequence is that of Ribonuclease HII from Klebsiella pneumoniae subsp. pneumoniae (strain ATCC 700721 / MGH 78578).